A 179-amino-acid chain; its full sequence is Large ribosomal subunit protein uL5 (179 aa).

The protein belongs to the universal ribosomal protein uL5 family. As to quaternary structure, part of the 50S ribosomal subunit; part of the 5S rRNA/L5/L18/L25 subcomplex. Contacts the 5S rRNA and the P site tRNA. Forms a bridge to the 30S subunit in the 70S ribosome.

Its function is as follows. This is one of the proteins that bind and probably mediate the attachment of the 5S RNA into the large ribosomal subunit, where it forms part of the central protuberance. In the 70S ribosome it contacts protein S13 of the 30S subunit (bridge B1b), connecting the 2 subunits; this bridge is implicated in subunit movement. Contacts the P site tRNA; the 5S rRNA and some of its associated proteins might help stabilize positioning of ribosome-bound tRNAs. In Stutzerimonas stutzeri (strain A1501) (Pseudomonas stutzeri), this protein is Large ribosomal subunit protein uL5.